The primary structure comprises 487 residues: Arginine ADP-riboxanase OspC3 (487 aa).

Residues 1 to 14 (MRVETHSPSFTNPN) are compositionally biased toward polar residues. The disordered stretch occupies residues 1–41 (MRVETHSPSFTNPNPAEACSGDPTEMGSRLSGVSRAPLPHA). H137, Q138, S139, S164, N167, and T168 together coordinate NAD(+). E325 is a catalytic residue. ANK repeat units follow at residues 368–398 (DAVT…EAKD) and 444–473 (RGDT…DRNL).

This sequence belongs to the OspC family.

It is found in the secreted. The protein localises to the host cytoplasm. The enzyme catalyses L-arginyl-[protein] + NAD(+) = ADP-riboxanated L-argininyl-[protein] + nicotinamide + NH4(+) + H(+). Functionally, ADP-riboxanase effector that inhibits host cell pyroptosis. Acts by mediating arginine ADP-riboxanation of host CASP4/CASP11, blocking CASP4/CASP11 autoprocessing. This prevents CASP4 activation and ability to recognize and cleave GSDMD, thereby inhibiting LPS-induced pyroptosis. ADP-riboxanation takes place in two steps: OspC3 first catalyzes ADP-ribosylation of target Arg, and then initiates a deamination to remove one N-omega group. In Chromobacterium sp. (strain ATCC 53434 / SC 14030), this protein is Arginine ADP-riboxanase OspC3.